A 141-amino-acid chain; its full sequence is Mu-like prophage FluMu protein gp36 (141 aa).

It to phage Mu protein gp36.

The protein is Mu-like prophage FluMu protein gp36 of Haemophilus influenzae (strain ATCC 51907 / DSM 11121 / KW20 / Rd).